The chain runs to 308 residues: Lipoyl synthase (308 aa).

[4Fe-4S] cluster contacts are provided by Cys51, Cys56, Cys62, Cys77, Cys81, Cys84, and Ser290. Residues 63-279 (WSKRHATFMI…ETIAKSKGFL (217 aa)) enclose the Radical SAM core domain.

Belongs to the radical SAM superfamily. Lipoyl synthase family. The cofactor is [4Fe-4S] cluster.

It localises to the cytoplasm. The enzyme catalyses [[Fe-S] cluster scaffold protein carrying a second [4Fe-4S](2+) cluster] + N(6)-octanoyl-L-lysyl-[protein] + 2 oxidized [2Fe-2S]-[ferredoxin] + 2 S-adenosyl-L-methionine + 4 H(+) = [[Fe-S] cluster scaffold protein] + N(6)-[(R)-dihydrolipoyl]-L-lysyl-[protein] + 4 Fe(3+) + 2 hydrogen sulfide + 2 5'-deoxyadenosine + 2 L-methionine + 2 reduced [2Fe-2S]-[ferredoxin]. Its pathway is protein modification; protein lipoylation via endogenous pathway; protein N(6)-(lipoyl)lysine from octanoyl-[acyl-carrier-protein]: step 2/2. Functionally, catalyzes the radical-mediated insertion of two sulfur atoms into the C-6 and C-8 positions of the octanoyl moiety bound to the lipoyl domains of lipoate-dependent enzymes, thereby converting the octanoylated domains into lipoylated derivatives. The sequence is that of Lipoyl synthase from Pelagibacter ubique (strain HTCC1062).